A 269-amino-acid chain; its full sequence is Hydroxyethylthiazole kinase (269 aa).

M45 is a binding site for substrate. Positions 121 and 167 each coordinate ATP. G194 is a substrate binding site.

This sequence belongs to the Thz kinase family. Mg(2+) serves as cofactor.

The catalysed reaction is 5-(2-hydroxyethyl)-4-methylthiazole + ATP = 4-methyl-5-(2-phosphooxyethyl)-thiazole + ADP + H(+). It participates in cofactor biosynthesis; thiamine diphosphate biosynthesis; 4-methyl-5-(2-phosphoethyl)-thiazole from 5-(2-hydroxyethyl)-4-methylthiazole: step 1/1. In terms of biological role, catalyzes the phosphorylation of the hydroxyl group of 4-methyl-5-beta-hydroxyethylthiazole (THZ). The chain is Hydroxyethylthiazole kinase from Bacillus cereus (strain ATCC 14579 / DSM 31 / CCUG 7414 / JCM 2152 / NBRC 15305 / NCIMB 9373 / NCTC 2599 / NRRL B-3711).